The primary structure comprises 555 residues: T-complex protein 1 subunit gamma (555 aa).

The tract at residues 527–555 (KKKQAPGSGPSKPTIETEGDADNEQILPD) is disordered.

This sequence belongs to the TCP-1 chaperonin family. In terms of assembly, heterooligomeric complex of about 850 to 900 kDa that forms two stacked rings, 12 to 16 nm in diameter. Interacts with CCT8.

The protein resides in the cytoplasm. Molecular chaperone; assists the folding of proteins upon ATP hydrolysis. Known to play a role, in vitro, in the folding of actin and tubulin. This chain is T-complex protein 1 subunit gamma, found in Arabidopsis thaliana (Mouse-ear cress).